The primary structure comprises 628 residues: Chaperone protein HtpG (628 aa).

The segment at 1-340 (MKGQETRGFQ…SNDLPLNVSR (340 aa)) is a; substrate-binding. Residues 341 to 556 (EILQDSRVTQ…ADDMTTQMAK (216 aa)) are b. The tract at residues 557–628 (LFAAAGQAAP…IRRMNQLLNA (72 aa)) is c.

Belongs to the heat shock protein 90 family. Homodimer.

The protein localises to the cytoplasm. Molecular chaperone. Has ATPase activity. This Sodalis glossinidius (strain morsitans) protein is Chaperone protein HtpG.